The primary structure comprises 265 residues: Acyl-[acyl-carrier-protein]--UDP-N-acetylglucosamine O-acyltransferase (265 aa).

Belongs to the transferase hexapeptide repeat family. LpxA subfamily. Homotrimer.

The protein resides in the cytoplasm. The catalysed reaction is a (3R)-hydroxyacyl-[ACP] + UDP-N-acetyl-alpha-D-glucosamine = a UDP-3-O-[(3R)-3-hydroxyacyl]-N-acetyl-alpha-D-glucosamine + holo-[ACP]. It functions in the pathway glycolipid biosynthesis; lipid IV(A) biosynthesis; lipid IV(A) from (3R)-3-hydroxytetradecanoyl-[acyl-carrier-protein] and UDP-N-acetyl-alpha-D-glucosamine: step 1/6. Involved in the biosynthesis of lipid A, a phosphorylated glycolipid that anchors the lipopolysaccharide to the outer membrane of the cell. The chain is Acyl-[acyl-carrier-protein]--UDP-N-acetylglucosamine O-acyltransferase from Polynucleobacter asymbioticus (strain DSM 18221 / CIP 109841 / QLW-P1DMWA-1) (Polynucleobacter necessarius subsp. asymbioticus).